Reading from the N-terminus, the 177-residue chain is Isopentenyl-diphosphate Delta-isomerase 1 (177 aa).

2 residues coordinate Mn(2+): His24 and His30. A Nudix hydrolase domain is found at 28–160; the sequence is SLHRAISIFI…PHAYSFWLEA (133 aa). Cys65 is an active-site residue. Position 65 (Cys65) interacts with Mg(2+). Residue His67 coordinates Mn(2+). Glu85 is a binding site for Mg(2+). Glu110 and Glu112 together coordinate Mn(2+). The active site involves Glu112.

Belongs to the IPP isomerase type 1 family. It depends on Mg(2+) as a cofactor. Requires Mn(2+) as cofactor.

It is found in the cytoplasm. The catalysed reaction is isopentenyl diphosphate = dimethylallyl diphosphate. The protein operates within isoprenoid biosynthesis; dimethylallyl diphosphate biosynthesis; dimethylallyl diphosphate from isopentenyl diphosphate: step 1/1. In terms of biological role, catalyzes the 1,3-allylic rearrangement of the homoallylic substrate isopentenyl (IPP) to its highly electrophilic allylic isomer, dimethylallyl diphosphate (DMAPP). This Aromatoleum aromaticum (strain DSM 19018 / LMG 30748 / EbN1) (Azoarcus sp. (strain EbN1)) protein is Isopentenyl-diphosphate Delta-isomerase 1.